The chain runs to 327 residues: MDAPDAPHTPKYMDGGNTAASVTPGINIPGKSAFVELQQHAAAGYGGIRSTYQHFGPQGGQDSGFPSPRSALGYPFPPMHQNSYSGYHLGSYAPPCASPPKDDFSISDKCEDSGLRVNGKGKKMRKPRTIYSSLQLQQLNRRFQRTQYLALPERAELAASLGLTQTQVKIWFQNRRSKYKKMMKAAQGPGTNSGMPLGGGGPNPGQHSPNQMHSGGNNGGGSNSGSPSHYLPPGHSPTPSSTPVSELSPEFPPTGLSPPTQAPWDQKPHWIDHKPPPQMTPQPPHPAATLHPQTHHHNPPPQMGGYVPQYWYQPETNPSLVTVWPAV.

The homeobox DNA-binding region spans 124 to 183 (MRKPRTIYSSLQLQQLNRRFQRTQYLALPERAELAASLGLTQTQVKIWFQNRRSKYKKMM). A disordered region spans residues 181 to 303 (KMMKAAQGPG…THHHNPPPQM (123 aa)). Residues 231-249 (LPPGHSPTPSSTPVSELSP) show a composition bias toward low complexity. Positions 266–275 (QKPHWIDHKP) are enriched in basic and acidic residues. Positions 276–286 (PPQMTPQPPHP) are enriched in pro residues.

Expressed in the embryo in limb primordia of the head and thoracic segments. Expressed in regions of the larval leg, wing, antennal and haltere disks that form the distal-most regions of the mature structures (in the leg this corresponds to the tarsus and the distal tibia). Found in the optic center of the developing larval brain.

The protein resides in the nucleus. Its function is as follows. Transcription factor that plays a role in larval and adult appendage development. Specifies the identity of ventral appendages (including legs and antennae) and suppresses dorsal appendage development. Involved in patterning the distal-proximal limb axis. May control the adhesive properties of cells during limb morphogenesis. Also has a secondary role in the normal patterning of the wing margin. This chain is Homeotic protein distal-less (Dll), found in Drosophila melanogaster (Fruit fly).